A 223-amino-acid chain; its full sequence is Large ribosomal subunit protein bL21 (223 aa).

Residues 110–149 (TALKSTTAEPKAADAPKAKAKAAPKAEKAAAPKAEKAPAK) form a disordered region. Basic and acidic residues predominate over residues 133-147 (PKAEKAAAPKAEKAP).

The protein belongs to the bacterial ribosomal protein bL21 family. As to quaternary structure, part of the 50S ribosomal subunit. Contacts protein L20.

Its function is as follows. This protein binds to 23S rRNA in the presence of protein L20. This Maricaulis maris (strain MCS10) (Caulobacter maris) protein is Large ribosomal subunit protein bL21.